The sequence spans 1104 residues: Nitrite reductase [NAD(P)H] (1104 aa).

Residue Q44–E79 participates in FAD binding. NAD(+) is bound at residue Y146–T176. Residues K396 to P419 are disordered. Residues C500, C502, C535, and C538 each contribute to the [2Fe-2S] cluster site. C720, C726, C760, and C764 together coordinate [4Fe-4S] cluster. C764 serves as a coordination point for siroheme. The Rieske domain occupies W932–Y1040. Positions 976, 978, 1001, and 1004 each coordinate [2Fe-2S] cluster. Positions G1081–W1104 are disordered. The segment covering P1094–W1104 has biased composition (polar residues).

It belongs to the nitrite and sulfite reductase 4Fe-4S domain family. Homodimer. The cofactor is siroheme. [4Fe-4S] cluster is required as a cofactor. FAD serves as cofactor. Requires [2Fe-2S] cluster as cofactor.

The catalysed reaction is NH4(+) + 3 NADP(+) + 2 H2O = nitrite + 3 NADPH + 5 H(+). It carries out the reaction NH4(+) + 3 NAD(+) + 2 H2O = nitrite + 3 NADH + 5 H(+). It functions in the pathway nitrogen metabolism; nitrate reduction (assimilation). This is Nitrite reductase [NAD(P)H] (niiA) from Emericella nidulans (strain FGSC A4 / ATCC 38163 / CBS 112.46 / NRRL 194 / M139) (Aspergillus nidulans).